A 236-amino-acid polypeptide reads, in one-letter code: Factor V activator RVV-V alpha (236 aa).

Residues 1 to 227 form the Peptidase S1 domain; the sequence is VVGGDECNIN…YNNWIQNIIA (227 aa). 6 disulfide bridges follow: Cys-7/Cys-141, Cys-28/Cys-44, Cys-76/Cys-234, Cys-120/Cys-188, Cys-152/Cys-167, and Cys-178/Cys-203. Active-site charge relay system residues include His-43 and Asp-88. The active-site Charge relay system is Ser-182. Asn-229 carries an N-linked (GlcNAc...) asparagine glycan.

This sequence belongs to the peptidase S1 family. Snake venom subfamily. In terms of assembly, monomer. In terms of tissue distribution, expressed by the venom gland.

It is found in the secreted. It carries out the reaction Fully activates human clotting factor V by a single cleavage at the 1545-Trp-Tyr-Leu-Arg-|-Ser-Asn-Asn-Gly-1552 bond. Cattle, but not rabbit, factor V is cleaved, and no other proteins of the clotting system are attacked. Esterase activity is observed on Bz-Arg-OEt and Tos-Arg-OMe, and amidase activity on Phe-pipecolyl-Arg-NHPhNO2.. With respect to regulation, inhibited by D-Phe-Pro-Arg-chloromethyl ketone (FPRCK) (97%), PMSF (76%), and benzamidine (50%). Is not inhibited by BPTI, antithrombin and EDTA. Functionally, venom serine protease that activates factor V (F5) in a calcium-independent manner. It cleaves the Arg(1545)-Ser(1546) linkage in the human factor V molecule. Induces the coagulation of mammalian plasma. In Daboia siamensis (Eastern Russel's viper), this protein is Factor V activator RVV-V alpha.